The chain runs to 145 residues: D-aminoacyl-tRNA deacylase (145 aa).

Positions 137 to 138 (GP) match the Gly-cisPro motif, important for rejection of L-amino acids motif.

The protein belongs to the DTD family. Homodimer.

The protein localises to the cytoplasm. It catalyses the reaction glycyl-tRNA(Ala) + H2O = tRNA(Ala) + glycine + H(+). It carries out the reaction a D-aminoacyl-tRNA + H2O = a tRNA + a D-alpha-amino acid + H(+). Functionally, an aminoacyl-tRNA editing enzyme that deacylates mischarged D-aminoacyl-tRNAs. Also deacylates mischarged glycyl-tRNA(Ala), protecting cells against glycine mischarging by AlaRS. Acts via tRNA-based rather than protein-based catalysis; rejects L-amino acids rather than detecting D-amino acids in the active site. By recycling D-aminoacyl-tRNA to D-amino acids and free tRNA molecules, this enzyme counteracts the toxicity associated with the formation of D-aminoacyl-tRNA entities in vivo and helps enforce protein L-homochirality. The sequence is that of D-aminoacyl-tRNA deacylase from Salmonella paratyphi C (strain RKS4594).